A 370-amino-acid chain; its full sequence is Ubiquitin carboxyl-terminal hydrolase 46 (370 aa).

The region spanning 35–369 (FGLVNFGNTC…SGYILFYQSR (335 aa)) is the USP domain. C44 (nucleophile) is an active-site residue. Positions 186, 189, 233, and 236 each coordinate Zn(2+). H317 acts as the Proton acceptor in catalysis.

Belongs to the peptidase C19 family. USP12/USP46 subfamily. In terms of assembly, interacts with WDR48.

It carries out the reaction Thiol-dependent hydrolysis of ester, thioester, amide, peptide and isopeptide bonds formed by the C-terminal Gly of ubiquitin (a 76-residue protein attached to proteins as an intracellular targeting signal).. Its function is as follows. Deubiquitinating enzyme that plays a role in behavior, possibly by regulating GABA action. Has almost no deubiquitinating activity by itself and requires the interaction with wdr48 to have a high activity. This is Ubiquitin carboxyl-terminal hydrolase 46 (usp46) from Danio rerio (Zebrafish).